The chain runs to 198 residues: Holliday junction branch migration complex subunit RuvA (198 aa).

The domain I stretch occupies residues 1–63 (MYDYIKGQLT…EDAHLLFGFH (63 aa)). The interval 64-142 (TEDEKDVFLK…EAPQETGHTK (79 aa)) is domain II. Residues 143 to 147 (ARSNK) are flexible linker. Residues 148–198 (AGNTQLDEAIEALLALGYKAKELKKIRAFFEGTSETAEQYIKSALKLLMKG) form a domain III region.

The protein belongs to the RuvA family. Homotetramer. Forms an RuvA(8)-RuvB(12)-Holliday junction (HJ) complex. HJ DNA is sandwiched between 2 RuvA tetramers; dsDNA enters through RuvA and exits via RuvB. An RuvB hexamer assembles on each DNA strand where it exits the tetramer. Each RuvB hexamer is contacted by two RuvA subunits (via domain III) on 2 adjacent RuvB subunits; this complex drives branch migration. In the full resolvosome a probable DNA-RuvA(4)-RuvB(12)-RuvC(2) complex forms which resolves the HJ.

It is found in the cytoplasm. Its function is as follows. The RuvA-RuvB-RuvC complex processes Holliday junction (HJ) DNA during genetic recombination and DNA repair, while the RuvA-RuvB complex plays an important role in the rescue of blocked DNA replication forks via replication fork reversal (RFR). RuvA specifically binds to HJ cruciform DNA, conferring on it an open structure. The RuvB hexamer acts as an ATP-dependent pump, pulling dsDNA into and through the RuvAB complex. HJ branch migration allows RuvC to scan DNA until it finds its consensus sequence, where it cleaves and resolves the cruciform DNA. The protein is Holliday junction branch migration complex subunit RuvA of Streptococcus pyogenes serotype M1.